Reading from the N-terminus, the 123-residue chain is Translation initiation factor 1A (123 aa).

Residues 1–11 (MSPDKTEDEDK) are compositionally biased toward acidic residues. Residues 1 to 26 (MSPDKTEDEDKDVNVDQDQFNEEEES) are disordered. Residues 28–102 (GRVILPNKKK…EKADVVYRYT (75 aa)) enclose the S1-like domain.

The protein belongs to the eIF-1A family.

In terms of biological role, seems to be required for maximal rate of protein biosynthesis. Enhances ribosome dissociation into subunits and stabilizes the binding of the initiator Met-tRNA(I) to 40 S ribosomal subunits. The chain is Translation initiation factor 1A (eIF1A) from Thermoplasma volcanium (strain ATCC 51530 / DSM 4299 / JCM 9571 / NBRC 15438 / GSS1).